We begin with the raw amino-acid sequence, 113 residues long: Large ribosomal subunit protein uL24 (113 aa).

The tract at residues 48-70 (HRKRVTNDKGTSSGGLEKRESPM) is disordered.

It belongs to the universal ribosomal protein uL24 family. As to quaternary structure, part of the 50S ribosomal subunit.

Functionally, one of two assembly initiator proteins, it binds directly to the 5'-end of the 23S rRNA, where it nucleates assembly of the 50S subunit. Its function is as follows. One of the proteins that surrounds the polypeptide exit tunnel on the outside of the subunit. In Tropheryma whipplei (strain TW08/27) (Whipple's bacillus), this protein is Large ribosomal subunit protein uL24.